Here is a 191-residue protein sequence, read N- to C-terminus: Peptidyl-tRNA hydrolase (191 aa).

Tyr17 contributes to the tRNA binding site. The active-site Proton acceptor is the His22. Residues Tyr68, Asn70, and Asn116 each contribute to the tRNA site.

Belongs to the PTH family. As to quaternary structure, monomer.

The protein resides in the cytoplasm. The catalysed reaction is an N-acyl-L-alpha-aminoacyl-tRNA + H2O = an N-acyl-L-amino acid + a tRNA + H(+). Hydrolyzes ribosome-free peptidyl-tRNAs (with 1 or more amino acids incorporated), which drop off the ribosome during protein synthesis, or as a result of ribosome stalling. Its function is as follows. Catalyzes the release of premature peptidyl moieties from peptidyl-tRNA molecules trapped in stalled 50S ribosomal subunits, and thus maintains levels of free tRNAs and 50S ribosomes. In Mycolicibacterium smegmatis (strain ATCC 700084 / mc(2)155) (Mycobacterium smegmatis), this protein is Peptidyl-tRNA hydrolase.